The chain runs to 457 residues: Multidrug resistance protein MdtK (457 aa).

Over 1–10 (MQKYISEARL) the chain is Cytoplasmic. The helical transmembrane segment at 11 to 31 (LLALAIPVILAQIAQTAMGFV) threads the bilayer. Over 32 to 52 (DTVMAGGYSATDMAAVAIGTS) the chain is Periplasmic. Residues 53–73 (IWLPAILFGHGLLLALTPVIA) traverse the membrane as a helical segment. The Cytoplasmic portion of the chain corresponds to 74–92 (QLNGSGRRERIAHQVRQGF). A helical transmembrane segment spans residues 93 to 113 (WLAGFVSVLIMLVLWNAGYII). The Periplasmic segment spans residues 114 to 126 (RYMENIDPALADK). The helical transmembrane segment at 127 to 147 (AVGYLRALLWGAPGYLFFQVA) threads the bilayer. Residues 148–159 (RNQCEGLAKAKP) are Cytoplasmic-facing. The helical transmembrane segment at 160–180 (GMVMGFIGLLVNIPVNYIFIY) threads the bilayer. Topologically, residues 181-188 (GHFGMPEL) are periplasmic. The chain crosses the membrane as a helical span at residues 189–209 (GGVGCGVATAAVYWVMFLAMV). Residues 210 to 242 (SYIKRARSMRDIRNEKGTAKPEPAVMKRLIQLG) lie on the Cytoplasmic side of the membrane. Residues 243–263 (LPIALALFLEVTLFAVVALLV) form a helical membrane-spanning segment. The Periplasmic segment spans residues 264–275 (SPLGIVDVAGHQ). A helical membrane pass occupies residues 276-296 (IALNFSSLMFVLPMSLAAAVT). The Cytoplasmic segment spans residues 297–313 (IRVGYRLGQGSTLDAQT). A helical membrane pass occupies residues 314–334 (AARTGLMVGVCMATLTAIFTV). Residues 335–349 (SLREQIALLYNDNPE) lie on the Periplasmic side of the membrane. The chain crosses the membrane as a helical span at residues 350-370 (VVTLAAHLMLLAAVYQISDSI). Topologically, residues 371–386 (QVIGSGILRGYKDTRS) are cytoplasmic. A helical membrane pass occupies residues 387–407 (IFYITFTAYWVLGLPSGYILA). Residues 408 to 417 (LTDLVVEPMG) are Periplasmic-facing. Residues 418–438 (PAGFWIGFIIGLTSAAIMMML) traverse the membrane as a helical segment. Residues 439 to 457 (RMRFLQRMPSAIILQRASR) are Cytoplasmic-facing.

This sequence belongs to the multi antimicrobial extrusion (MATE) (TC 2.A.66.1) family. MdtK subfamily.

The protein localises to the cell inner membrane. Its function is as follows. Multidrug efflux pump that functions probably as a Na(+)/drug antiporter. In Shigella flexneri serotype 5b (strain 8401), this protein is Multidrug resistance protein MdtK.